The following is a 314-amino-acid chain: Methionyl-tRNA formyltransferase (314 aa).

112–115 (SLLP) contacts (6S)-5,6,7,8-tetrahydrofolate.

Belongs to the Fmt family.

It catalyses the reaction L-methionyl-tRNA(fMet) + (6R)-10-formyltetrahydrofolate = N-formyl-L-methionyl-tRNA(fMet) + (6S)-5,6,7,8-tetrahydrofolate + H(+). In terms of biological role, attaches a formyl group to the free amino group of methionyl-tRNA(fMet). The formyl group appears to play a dual role in the initiator identity of N-formylmethionyl-tRNA by promoting its recognition by IF2 and preventing the misappropriation of this tRNA by the elongation apparatus. The polypeptide is Methionyl-tRNA formyltransferase (Legionella pneumophila subsp. pneumophila (strain Philadelphia 1 / ATCC 33152 / DSM 7513)).